We begin with the raw amino-acid sequence, 198 residues long: Leucine-rich melanocyte differentiation-associated protein (198 aa).

LRR repeat units lie at residues 2 to 22 (EKYL…EGLS), 26 to 47 (SLEE…PGLP), 48 to 69 (RLHT…LDHL), and 75 to 95 (ALEY…VSLE). The LRRCT domain maps to 96-134 (KDEEDYKRYRCFVLYKLPNLKFLDAQKVTRQEREEALVR).

As to expression, in the embryo, expressed in melanoblasts. In the fetus, expressed in melanocytes. Not detected in retinal pigment epithelial cells.

Required for melanocyte differentiation. The chain is Leucine-rich melanocyte differentiation-associated protein from Homo sapiens (Human).